Reading from the N-terminus, the 1492-residue chain is DNA polymerase alpha catalytic subunit (1492 aa).

Disordered regions lie at residues 34–112, 162–195, and 210–234; these read DFIV…VEQS, SVTL…DVNP, and ANSY…EMAN. A compositionally biased stretch (basic and acidic residues) spans 42-55; the sequence is YGYRDHGGEIWDRD. Residues 93 to 105 show a composition bias toward polar residues; it reads NAASTNPSAQQKP. Residues 166–178 show a composition bias toward basic and acidic residues; the sequence is ESREEQERRRQSE. Composition is skewed to polar residues over residues 184–194 and 210–224; these read ANIGQNQSDVN and ANSY…SVSK. Positions 1314, 1317, 1341, 1344, 1375, 1380, 1393, and 1398 each coordinate Zn(2+). Residues 1314–1344 form a CysA-type zinc finger; sequence CPHCAHNYHFPGILVPSSNNTELTGLACVKC. Positions 1375–1398 match the CysB motif motif; it reads CKEPQCGMKTNQLLLNNKCIVKGC.

It belongs to the DNA polymerase type-B family.

Its subcellular location is the nucleus. It carries out the reaction DNA(n) + a 2'-deoxyribonucleoside 5'-triphosphate = DNA(n+1) + diphosphate. Its function is as follows. Polymerase alpha in a complex with DNA primase is a replicative polymerase. This chain is DNA polymerase alpha catalytic subunit, found in Sterkiella nova (Ciliate).